Here is a 330-residue protein sequence, read N- to C-terminus: Carbonic anhydrase (330 aa).

The chloroplast transit peptide-like stretch occupies residues 1 to 109; that stretch reads MSAASAFAMN…AATRIDQITA (109 aa).

It belongs to the beta-class carbonic anhydrase family.

The protein localises to the cytoplasm. It carries out the reaction hydrogencarbonate + H(+) = CO2 + H2O. Its function is as follows. Reversible hydration of carbon dioxide. The sequence is that of Carbonic anhydrase from Flaveria bidentis (Coastal plain yellowtops).